A 123-amino-acid chain; its full sequence is Small ribosomal subunit protein uS12cz/uS12cy (123 aa).

Belongs to the universal ribosomal protein uS12 family. In terms of assembly, part of the 30S ribosomal subunit.

The protein resides in the plastid. The protein localises to the chloroplast. In terms of biological role, with S4 and S5 plays an important role in translational accuracy. Located at the interface of the 30S and 50S subunits. The polypeptide is Small ribosomal subunit protein uS12cz/uS12cy (rps12-A) (Arabis hirsuta (Hairy rock-cress)).